The chain runs to 419 residues: NFATC2-interacting protein (419 aa).

2 disordered regions span residues 1–131 (MAEP…GKVK) and 151–215 (DEEE…HTRA). Positions 11 to 27 (WSGGSGAGRGGRGGWGG) are enriched in gly residues. A compositionally biased stretch (low complexity) spans 35–51 (QRSPSRGTLDVVSVDLV). A phosphoserine mark is found at Ser54, Ser84, Ser88, Ser90, Ser92, and Ser127. Residues Lys129 and Lys131 each participate in a glycyl lysine isopeptide (Lys-Gly) (interchain with G-Cter in SUMO2) cross-link. A compositionally biased stretch (basic and acidic residues) spans 180–192 (RTKDKEEKKKTEF). A phosphoserine mark is found at Ser198, Ser201, Ser204, Ser220, and Ser314. The stretch at 209-231 (SRTHTRALKKLSEVNKRLQDLRS) forms a coiled coil. 2 positions are modified to phosphothreonine: Thr316 and Thr318. A Ubiquitin-like domain is found at 348-419 (LQLRVQGKEK…ESGDLIEVWG (72 aa)). 2 positions are modified to phosphoserine: Ser369 and Ser390.

Interacts with NFATC2, TRAF1, TRAF2 and PRMT1. Interacts with UBE2I/UBC9. In terms of processing, methylation at the N-terminus by PRMT1 modulates interaction with the NFAT complex and results in augmented cytokine production.

The protein localises to the nucleus. Its subcellular location is the cytoplasm. Its function is as follows. In T-helper 2 (Th2) cells, regulates the magnitude of NFAT-driven transcription of a specific subset of cytokine genes, including IL3, IL4, IL5 and IL13, but not IL2. Recruits PRMT1 to the IL4 promoter; this leads to enhancement of histone H4 'Arg-3'-methylation and facilitates subsequent histone acetylation at the IL4 locus, thus promotes robust cytokine expression. Down-regulates formation of poly-SUMO chains by UBE2I/UBC9. This Homo sapiens (Human) protein is NFATC2-interacting protein (NFATC2IP).